Consider the following 334-residue polypeptide: Large ribosomal subunit protein uL3 (334 aa).

The span at 1-10 shows a compositional bias: basic residues; that stretch reads MGMKKNRPRR. Residues 1–21 form a disordered region; it reads MGMKKNRPRRGSLAFSPRKRA.

It belongs to the universal ribosomal protein uL3 family. As to quaternary structure, part of the 50S ribosomal subunit. Forms a cluster with proteins L14 and L24e.

One of the primary rRNA binding proteins, it binds directly near the 3'-end of the 23S rRNA, where it nucleates assembly of the 50S subunit. This chain is Large ribosomal subunit protein uL3, found in Methanococcus maripaludis (strain C5 / ATCC BAA-1333).